Reading from the N-terminus, the 213-residue chain is Orotate phosphoribosyltransferase (213 aa).

Lys-26 is a binding site for 5-phospho-alpha-D-ribose 1-diphosphate. 34–35 lines the orotate pocket; the sequence is FF. Residues 72–73, Arg-99, Lys-100, Lys-103, His-105, and 124–132 contribute to the 5-phospho-alpha-D-ribose 1-diphosphate site; these read YK and DDVITAGTA. Thr-128 and Arg-156 together coordinate orotate.

The protein belongs to the purine/pyrimidine phosphoribosyltransferase family. PyrE subfamily. In terms of assembly, homodimer. Requires Mg(2+) as cofactor.

The enzyme catalyses orotidine 5'-phosphate + diphosphate = orotate + 5-phospho-alpha-D-ribose 1-diphosphate. It participates in pyrimidine metabolism; UMP biosynthesis via de novo pathway; UMP from orotate: step 1/2. Catalyzes the transfer of a ribosyl phosphate group from 5-phosphoribose 1-diphosphate to orotate, leading to the formation of orotidine monophosphate (OMP). In Pseudomonas syringae pv. syringae (strain B728a), this protein is Orotate phosphoribosyltransferase.